A 460-amino-acid chain; its full sequence is V-type ATP synthase beta chain (460 aa).

This sequence belongs to the ATPase alpha/beta chains family.

In terms of biological role, produces ATP from ADP in the presence of a proton gradient across the membrane. The V-type beta chain is a regulatory subunit. The sequence is that of V-type ATP synthase beta chain from Anaeromyxobacter sp. (strain Fw109-5).